A 144-amino-acid chain; its full sequence is Hexon-interlacing protein (144 aa).

Positions 106 to 133 (LTVMLAKLETLTAQLEELSQKVEELADA) form a coiled coil.

This sequence belongs to the adenoviridae hexon-interlacing protein family. In terms of assembly, homotrimer. Interacts with hexon protein; this interaction tethers the hexons together. Self-interacts with adjacent proteins. Interacts with kinesin light chain KLC1; this interaction leads to capsid disruption at the nuclear pore complex during virus entry into host cell.

It is found in the virion. It localises to the host nucleus. Functionally, structural component of the virion that acts as a cement protein on the capsid exterior and forms triskelion structures consisting of three molecules that stabilize three hexon trimers at the center of each icosahedral facet and fixes the peripentonal hexons. Dispensable for assembly. During virus entry, recruits the anterograde motor kinesin-1 to the capsid docked at the nuclear pore complex thereby subjecting the docked capsid to a pulling force. The resulting tension leads to capsid disruption, dispersion of capsid fragments toward cell periphery and eventually viral DNA entry into the host nucleus. This Homo sapiens (Human) protein is Hexon-interlacing protein.